We begin with the raw amino-acid sequence, 161 residues long: Large ribosomal subunit protein uL15 (161 aa).

Positions 1–42 (MKLSDIADNAGSRKKRMRVGRGIGSGKGKQSGRGGKGQTARS) are disordered. Over residues 21–37 (RGIGSGKGKQSGRGGKG) the composition is skewed to gly residues.

The protein belongs to the universal ribosomal protein uL15 family. Part of the 50S ribosomal subunit.

In terms of biological role, binds to the 23S rRNA. This is Large ribosomal subunit protein uL15 from Bradyrhizobium diazoefficiens (strain JCM 10833 / BCRC 13528 / IAM 13628 / NBRC 14792 / USDA 110).